The chain runs to 166 residues: Large ribosomal subunit protein uL10 (166 aa).

Belongs to the universal ribosomal protein uL10 family. In terms of assembly, part of the ribosomal stalk of the 50S ribosomal subunit. The N-terminus interacts with L11 and the large rRNA to form the base of the stalk. The C-terminus forms an elongated spine to which L12 dimers bind in a sequential fashion forming a multimeric L10(L12)X complex.

Its function is as follows. Forms part of the ribosomal stalk, playing a central role in the interaction of the ribosome with GTP-bound translation factors. The chain is Large ribosomal subunit protein uL10 from Stutzerimonas stutzeri (strain A1501) (Pseudomonas stutzeri).